A 495-amino-acid chain; its full sequence is Membrane-bound lytic murein transglycosylase F (495 aa).

The first 30 residues, 1 to 30 (MSRIRHHRFIQSCLVISTLLITLTGCQVES), serve as a signal peptide directing secretion. The interval 31-270 (EPKTKLEQIR…LLEEKYFGHV (240 aa)) is non-LT domain. Residues 272–495 (SFDYVDTRAF…SVSQAIETKK (224 aa)) are LT domain. The active site involves Glu315.

This sequence in the N-terminal section; belongs to the bacterial solute-binding protein 3 family. It in the C-terminal section; belongs to the transglycosylase Slt family.

Its subcellular location is the cell outer membrane. It catalyses the reaction Exolytic cleavage of the (1-&gt;4)-beta-glycosidic linkage between N-acetylmuramic acid (MurNAc) and N-acetylglucosamine (GlcNAc) residues in peptidoglycan, from either the reducing or the non-reducing ends of the peptidoglycan chains, with concomitant formation of a 1,6-anhydrobond in the MurNAc residue.. Its function is as follows. Murein-degrading enzyme that degrades murein glycan strands and insoluble, high-molecular weight murein sacculi, with the concomitant formation of a 1,6-anhydromuramoyl product. Lytic transglycosylases (LTs) play an integral role in the metabolism of the peptidoglycan (PG) sacculus. Their lytic action creates space within the PG sacculus to allow for its expansion as well as for the insertion of various structures such as secretion systems and flagella. In Aliivibrio fischeri (strain ATCC 700601 / ES114) (Vibrio fischeri), this protein is Membrane-bound lytic murein transglycosylase F.